The primary structure comprises 141 residues: Auxin-responsive protein SAUR61 (141 aa).

It belongs to the ARG7 family.

It localises to the cell membrane. May promote auxin-stimulated organ elongation, such as hypocotyls, stamen filaments and petals. The sequence is that of Auxin-responsive protein SAUR61 from Arabidopsis thaliana (Mouse-ear cress).